Consider the following 110-residue polypeptide: Large ribosomal subunit protein uL22 (110 aa).

It belongs to the universal ribosomal protein uL22 family. Part of the 50S ribosomal subunit.

This protein binds specifically to 23S rRNA; its binding is stimulated by other ribosomal proteins, e.g. L4, L17, and L20. It is important during the early stages of 50S assembly. It makes multiple contacts with different domains of the 23S rRNA in the assembled 50S subunit and ribosome. Functionally, the globular domain of the protein is located near the polypeptide exit tunnel on the outside of the subunit, while an extended beta-hairpin is found that lines the wall of the exit tunnel in the center of the 70S ribosome. This Geobacter metallireducens (strain ATCC 53774 / DSM 7210 / GS-15) protein is Large ribosomal subunit protein uL22.